The chain runs to 663 residues: A-type ATP synthase subunit I (663 aa).

Transmembrane regions (helical) follow at residues 376–396, 412–432, 468–488, 497–517, 534–554, 568–588, and 589–609; these read FFFG…IVAA, FAYI…LFGS, LAAL…GFVI, GAVF…LLAS, IALF…LMII, ARLM…NVLV, and GMVW…IIFF.

Belongs to the V-ATPase 116 kDa subunit family. Has multiple subunits with at least A(3), B(3), C, D, E, F, H, I and proteolipid K(x).

It localises to the cell membrane. Component of the A-type ATP synthase that produces ATP from ADP in the presence of a proton gradient across the membrane. The sequence is that of A-type ATP synthase subunit I from Thermococcus kodakarensis (strain ATCC BAA-918 / JCM 12380 / KOD1) (Pyrococcus kodakaraensis (strain KOD1)).